Here is a 299-residue protein sequence, read N- to C-terminus: tRNA dimethylallyltransferase (299 aa).

Residue 11-18 participates in ATP binding; that stretch reads GPTAVGKT. 13-18 contributes to the substrate binding site; it reads TAVGKT. The interaction with substrate tRNA stretch occupies residues 36-39; it reads DSQQ.

This sequence belongs to the IPP transferase family. Monomer. Mg(2+) serves as cofactor.

It carries out the reaction adenosine(37) in tRNA + dimethylallyl diphosphate = N(6)-dimethylallyladenosine(37) in tRNA + diphosphate. Catalyzes the transfer of a dimethylallyl group onto the adenine at position 37 in tRNAs that read codons beginning with uridine, leading to the formation of N6-(dimethylallyl)adenosine (i(6)A). This Streptococcus pyogenes serotype M1 protein is tRNA dimethylallyltransferase.